A 157-amino-acid chain; its full sequence is MRIGIGIDVHSFKEGRKLIVGGVDIPSPKGLDGHSDADVLLHAVSDALLGAAALGDIGLHFPDTSPEFKDIDSMILLKHVGKLLEKNGWRTVNVDAMLLLEAPKIAPFVVDMRKNIARCLQIETDLVSVKATTNEKLGYIGREEGAAAHAVCIIEKA.

A divalent metal cation-binding residues include Asp8 and His10. Residues 8–10 (DVH) and 34–35 (HS) contribute to the 4-CDP-2-C-methyl-D-erythritol 2-phosphate site. Position 42 (His42) interacts with a divalent metal cation. Residues 56–58 (DIG), 132–135 (TTNE), and Arg142 contribute to the 4-CDP-2-C-methyl-D-erythritol 2-phosphate site.

Belongs to the IspF family. Homotrimer. The cofactor is a divalent metal cation.

It carries out the reaction 4-CDP-2-C-methyl-D-erythritol 2-phosphate = 2-C-methyl-D-erythritol 2,4-cyclic diphosphate + CMP. It participates in isoprenoid biosynthesis; isopentenyl diphosphate biosynthesis via DXP pathway; isopentenyl diphosphate from 1-deoxy-D-xylulose 5-phosphate: step 4/6. In terms of biological role, involved in the biosynthesis of isopentenyl diphosphate (IPP) and dimethylallyl diphosphate (DMAPP), two major building blocks of isoprenoid compounds. Catalyzes the conversion of 4-diphosphocytidyl-2-C-methyl-D-erythritol 2-phosphate (CDP-ME2P) to 2-C-methyl-D-erythritol 2,4-cyclodiphosphate (ME-CPP) with a corresponding release of cytidine 5-monophosphate (CMP). This chain is 2-C-methyl-D-erythritol 2,4-cyclodiphosphate synthase, found in Chlorobium phaeovibrioides (strain DSM 265 / 1930) (Prosthecochloris vibrioformis (strain DSM 265)).